The primary structure comprises 690 residues: Proprotein convertase subtilisin/kexin type 9 (690 aa).

Residues 1–28 (MGTVSSRRSWWPLPLLLLLLLGPAGARA) form the signal peptide. The propeptide occupies 29-150 (QEDEDGDYEE…IEEDSSVFAQ (122 aa)). Y36 bears the Sulfotyrosine mark. S45 carries the phosphoserine modification. One can recognise an Inhibitor I9 domain in the interval 75–147 (TYVVVLKEET…VDYIEEDSSV (73 aa)). Residues 153–459 (PWNLERITPP…GWQLFCRTVW (307 aa)) form the Peptidase S8 domain. Residues D184 and H224 each act as charge relay system in the active site. 2 disulfides stabilise this stretch: C221-C253 and C321-C356. S384 (charge relay system) is an active-site residue. The segment at 448 to 690 (GAGWQLFCRT…HLVQASQELQ (243 aa)) is C-terminal domain. 3 disulfides stabilise this stretch: C455-C525, C475-C524, and C484-C507. N-linked (GlcNAc...) asparagine glycosylation is present at N531. 6 cysteine pairs are disulfide-bonded: C532–C599, C550–C598, C560–C586, C606–C677, C624–C676, and C633–C652. S686 is subject to Phosphoserine.

Belongs to the peptidase S8 family. As to quaternary structure, monomer. Can self-associate to form dimers and higher multimers which may have increased LDLR degrading activity. The precursor protein but not the mature protein may form multimers. Interacts with APOB, VLDLR, LRP8/APOER2 and BACE1. The full-length immature form (pro-PCSK9) interacts with SCNN1A, SCNN1B and SCNN1G. The pro-PCSK9 form (via C-terminal domain) interacts with LDLR. Interacts (via the C-terminal domain) with ANXA2 (via repeat Annexin 1); the interaction inhibits the degradation of LDLR. Ca(2+) serves as cofactor. Cleavage by furin and PCSK5 generates a truncated inactive protein that is unable to induce LDLR degradation. Post-translationally, undergoes autocatalytic cleavage in the endoplasmic reticulum to release the propeptide from the N-terminus and the cleavage of the propeptide is strictly required for its maturation and activation. The cleaved propeptide however remains associated with the catalytic domain through non-covalent interactions, preventing potential substrates from accessing its active site. As a result, it is secreted from cells as a propeptide-containing, enzymatically inactive protein. In terms of processing, phosphorylation protects the propeptide against proteolysis.

It is found in the cytoplasm. It localises to the secreted. The protein localises to the endosome. The protein resides in the lysosome. Its subcellular location is the cell surface. It is found in the endoplasmic reticulum. It localises to the golgi apparatus. Its proteolytic activity is autoinhibited by the non-covalent binding of the propeptide to the catalytic domain. Inhibited by EGTA. Crucial player in the regulation of plasma cholesterol homeostasis. Binds to low-density lipid receptor family members: low density lipoprotein receptor (LDLR), very low density lipoprotein receptor (VLDLR), apolipoprotein E receptor (LRP1/APOER) and apolipoprotein receptor 2 (LRP8/APOER2), and promotes their degradation in intracellular acidic compartments. Acts via a non-proteolytic mechanism to enhance the degradation of the hepatic LDLR through a clathrin LDLRAP1/ARH-mediated pathway. May prevent the recycling of LDLR from endosomes to the cell surface or direct it to lysosomes for degradation. Can induce ubiquitination of LDLR leading to its subsequent degradation. Inhibits intracellular degradation of APOB via the autophagosome/lysosome pathway in a LDLR-independent manner. Involved in the disposal of non-acetylated intermediates of BACE1 in the early secretory pathway. Inhibits epithelial Na(+) channel (ENaC)-mediated Na(+) absorption by reducing ENaC surface expression primarily by increasing its proteasomal degradation. Regulates neuronal apoptosis via modulation of LRP8/APOER2 levels and related anti-apoptotic signaling pathways. The protein is Proprotein convertase subtilisin/kexin type 9 (PCSK9) of Gorilla gorilla gorilla (Western lowland gorilla).